A 797-amino-acid chain; its full sequence is Outer membrane protein assembly factor BamA (797 aa).

The first 19 residues, 1-19, serve as a signal peptide directing secretion; the sequence is MKKLLIASLLFGTTTTVFA. POTRA domains are found at residues 22–89, 90–170, 173–259, 262–341, and 344–418; these read FVAK…VVAK, SIIS…INED, AKLA…VNEG, YDLR…VDAG, and LTVR…VKER.

The protein belongs to the BamA family. Part of the Bam complex.

It is found in the cell outer membrane. Functionally, part of the outer membrane protein assembly complex, which is involved in assembly and insertion of beta-barrel proteins into the outer membrane. This Haemophilus influenzae protein is Outer membrane protein assembly factor BamA.